We begin with the raw amino-acid sequence, 417 residues long: Serine hydroxymethyltransferase (417 aa).

(6S)-5,6,7,8-tetrahydrofolate is bound by residues leucine 121 and 125-127 (GHL). Position 229 is an N6-(pyridoxal phosphate)lysine (lysine 229). (6S)-5,6,7,8-tetrahydrofolate is bound at residue 355-357 (SPF).

It belongs to the SHMT family. Homodimer. Requires pyridoxal 5'-phosphate as cofactor.

The protein localises to the cytoplasm. The enzyme catalyses (6R)-5,10-methylene-5,6,7,8-tetrahydrofolate + glycine + H2O = (6S)-5,6,7,8-tetrahydrofolate + L-serine. It functions in the pathway one-carbon metabolism; tetrahydrofolate interconversion. It participates in amino-acid biosynthesis; glycine biosynthesis; glycine from L-serine: step 1/1. Catalyzes the reversible interconversion of serine and glycine with tetrahydrofolate (THF) serving as the one-carbon carrier. This reaction serves as the major source of one-carbon groups required for the biosynthesis of purines, thymidylate, methionine, and other important biomolecules. Also exhibits THF-independent aldolase activity toward beta-hydroxyamino acids, producing glycine and aldehydes, via a retro-aldol mechanism. This Xanthomonas oryzae pv. oryzae (strain MAFF 311018) protein is Serine hydroxymethyltransferase.